Here is a 544-residue protein sequence, read N- to C-terminus: Tyrosine-protein kinase Yes (544 aa).

G2 is lipidated: N-myristoyl glycine. The 62-residue stretch at 92-153 folds into the SH3 domain; that stretch reads GGVTFFVALY…PSNYVAPADS (62 aa). The region spanning 159 to 256 is the SH2 domain; the sequence is WYFGKLSRKD…GLCYKLTTVC (98 aa). A Protein kinase domain is found at 278 to 531; the sequence is LRLDVRLGQG…YIQSFLEDYF (254 aa). Residues 284–292 and K306 each bind ATP; that span reads LGQGCFGEV. Residue D397 is the Proton acceptor of the active site. Y427 carries the phosphotyrosine; by autocatalysis modification.

It belongs to the protein kinase superfamily. Tyr protein kinase family. SRC subfamily.

It catalyses the reaction L-tyrosyl-[protein] + ATP = O-phospho-L-tyrosyl-[protein] + ADP + H(+). In Xiphophorus hellerii (Green swordtail), this protein is Tyrosine-protein kinase Yes (yes).